A 200-amino-acid polypeptide reads, in one-letter code: Holliday junction branch migration complex subunit RuvA (200 aa).

Residues 1–64 (MFAYFRGKLT…EDLLQLYGFS (64 aa)) are domain I. The tract at residues 65 to 143 (GEEERQLFRL…KLSPVSALAS (79 aa)) is domain II. A flexible linker region spans residues 144-154 (PARLSSTLLRD). A domain III region spans residues 154 to 200 (DDAVNALVTLGFSRIIVQKAVVAILEQNPGLTVEEVIKAALVSIHNS).

The protein belongs to the RuvA family. Homotetramer. Forms an RuvA(8)-RuvB(12)-Holliday junction (HJ) complex. HJ DNA is sandwiched between 2 RuvA tetramers; dsDNA enters through RuvA and exits via RuvB. An RuvB hexamer assembles on each DNA strand where it exits the tetramer. Each RuvB hexamer is contacted by two RuvA subunits (via domain III) on 2 adjacent RuvB subunits; this complex drives branch migration. In the full resolvosome a probable DNA-RuvA(4)-RuvB(12)-RuvC(2) complex forms which resolves the HJ.

Its subcellular location is the cytoplasm. Functionally, the RuvA-RuvB-RuvC complex processes Holliday junction (HJ) DNA during genetic recombination and DNA repair, while the RuvA-RuvB complex plays an important role in the rescue of blocked DNA replication forks via replication fork reversal (RFR). RuvA specifically binds to HJ cruciform DNA, conferring on it an open structure. The RuvB hexamer acts as an ATP-dependent pump, pulling dsDNA into and through the RuvAB complex. HJ branch migration allows RuvC to scan DNA until it finds its consensus sequence, where it cleaves and resolves the cruciform DNA. The sequence is that of Holliday junction branch migration complex subunit RuvA from Pelodictyon phaeoclathratiforme (strain DSM 5477 / BU-1).